Consider the following 863-residue polypeptide: DNA mismatch repair protein MutS (863 aa).

617 to 624 contacts ATP; that stretch reads GPNMGGKS.

This sequence belongs to the DNA mismatch repair MutS family.

Its function is as follows. This protein is involved in the repair of mismatches in DNA. It is possible that it carries out the mismatch recognition step. This protein has a weak ATPase activity. This chain is DNA mismatch repair protein MutS, found in Pseudomonas fluorescens (strain SBW25).